The sequence spans 136 residues: NLP effector protein 13 (136 aa).

The short motif at 1–9 (MYSWYFPKD) is the Conserved undecapeptide motif I element. The Hepta-peptide GHRHDWE motif II motif lies at 16–22 (GHRHDWE).

The protein belongs to the Necrosis inducing protein (NPP1) family.

The protein resides in the secreted. Functionally, secreted effector that contributes moderately to virulence during infection by P.capsici. Causes only small yellow areas at 3 days after inoculation of host C.annuum leaves; these areas expand somewhat and became necrotic at 7 days after inoculation. Leads only to chlorotic areas, without necrosis at 7 days after non-host N.benthamiana leaves infection. In Phytophthora capsici, this protein is NLP effector protein 13.